A 622-amino-acid polypeptide reads, in one-letter code: Type 2 DNA topoisomerase 6 subunit B (622 aa).

Residues asparagine 48, aspartate 80, 101 to 102 (SR), 111 to 118 (GQQGIGIS), and lysine 435 contribute to the ATP site.

Belongs to the TOP6B family. As to quaternary structure, homodimer. Heterotetramer of two Top6A and two Top6B chains.

It catalyses the reaction ATP-dependent breakage, passage and rejoining of double-stranded DNA.. Functionally, relaxes both positive and negative superturns and exhibits a strong decatenase activity. The protein is Type 2 DNA topoisomerase 6 subunit B of Methanococcoides burtonii (strain DSM 6242 / NBRC 107633 / OCM 468 / ACE-M).